Consider the following 263-residue polypeptide: Ribonuclease HII (263 aa).

Residues 39–257 enclose the RNase H type-2 domain; that stretch reads AFFTGIDEAG…VKPAAAPHAA (219 aa). 3 residues coordinate a divalent metal cation: Asp-45, Glu-46, and Asp-157.

This sequence belongs to the RNase HII family. It depends on Mn(2+) as a cofactor. Requires Mg(2+) as cofactor.

The protein localises to the cytoplasm. It catalyses the reaction Endonucleolytic cleavage to 5'-phosphomonoester.. Endonuclease that specifically degrades the RNA of RNA-DNA hybrids. This is Ribonuclease HII from Oleidesulfovibrio alaskensis (strain ATCC BAA-1058 / DSM 17464 / G20) (Desulfovibrio alaskensis).